A 51-amino-acid polypeptide reads, in one-letter code: Small ribosomal subunit protein eS31 (51 aa).

Zn(2+)-binding residues include C21, C24, C39, and C42. The C4-type zinc finger occupies 21–42 (CPRCGPGVFLAEHEDRFSCGRC).

This sequence belongs to the eukaryotic ribosomal protein eS31 family. In terms of assembly, part of the 30S ribosomal subunit. Requires Zn(2+) as cofactor.

This is Small ribosomal subunit protein eS31 from Picrophilus torridus (strain ATCC 700027 / DSM 9790 / JCM 10055 / NBRC 100828 / KAW 2/3).